Here is a 397-residue protein sequence, read N- to C-terminus: ATP-dependent RNA helicase eIF4A (397 aa).

The Q motif signature appears at 24-52; it reads DSFDDMNLKSELLRGIYAYGFERPSAIQQ. A Helicase ATP-binding domain is found at 55–225; sequence IMPVIKGHDV…TKFMRDPVRI (171 aa). An ATP-binding site is contributed by 68 to 75; sequence AQSGTGKT. The short motif at 173–176 is the DEAD box element; sequence DEAD. The Helicase C-terminal domain occupies 236 to 397; sequence GIKQFYIAVE…EMPMNVADLI (162 aa).

It belongs to the DEAD box helicase family. eIF4A subfamily. Component of the eIF4F complex, which composition varies with external and internal environmental conditions. It is composed of at least eIF4A, eIF4E and eIF4G.

It is found in the cytoplasm. It catalyses the reaction ATP + H2O = ADP + phosphate + H(+). Functionally, ATP-dependent RNA helicase which is a subunit of the eIF4F complex involved in cap recognition and is required for mRNA binding to ribosome. In the current model of translation initiation, eIF4A unwinds RNA secondary structures in the 5'-UTR of mRNAs which is necessary to allow efficient binding of the small ribosomal subunit, and subsequent scanning for the initiator codon. This Chaetomium globosum (strain ATCC 6205 / CBS 148.51 / DSM 1962 / NBRC 6347 / NRRL 1970) (Soil fungus) protein is ATP-dependent RNA helicase eIF4A (TIF1).